The sequence spans 1032 residues: Putative oxidoreductase YgfK (1032 aa).

Positions 928 to 958 (RFQTLHLDAYCNECGNCAQFCPWNGKPYKDK) constitute a 4Fe-4S ferredoxin-type domain. [4Fe-4S] cluster-binding residues include Cys938, Cys941, Cys944, and Cys948.

[4Fe-4S] cluster is required as a cofactor.

In terms of biological role, could be an iron-sulfur flavoprotein with NADPH:O(2) oxidoreductase activity. This Escherichia coli O157:H7 protein is Putative oxidoreductase YgfK (ygfK).